Consider the following 223-residue polypeptide: MRVKEMNESLRPREKMKINGISSMSDEELMQIILKTGIKEEGVEILSKRVIDYINENDYKDLCVEELMKIKGIGMAKATSILAGIEIGRRLSLRKAMDSFSLNDPDSVAEIFCNEIGSCDVENFYALLLDTKNRIISKELISKGTINQSIVHPREVFKSAIKKGANSIILVHNHPSGSLIPSNADIEVTKRLDKVGDLVGIQVLDHIIVSSNDSLSMRKGMYF.

The MPN domain occupies 101-223 (SLNDPDSVAE…SLSMRKGMYF (123 aa)). Zn(2+) contacts are provided by histidine 172, histidine 174, and aspartate 185. Residues 172–185 (HNHPSGSLIPSNAD) carry the JAMM motif motif.

Belongs to the UPF0758 family.

In Finegoldia magna (strain ATCC 29328 / DSM 20472 / WAL 2508) (Peptostreptococcus magnus), this protein is UPF0758 protein FMG_0357.